We begin with the raw amino-acid sequence, 184 residues long: Transmembrane protein 140 (184 aa).

Residues 1–12 (MAISRVWRNRLS) are Cytoplasmic-facing. A helical membrane pass occupies residues 13-33 (FMAIMILVAMVLSLMSYALLW). Over 34–83 (KAGNLTDVPNLRIGFYNFCLWKEDIGSLECYNFPELGVLGIPQVGLALAR) the chain is Extracellular. A glycan (N-linked (GlcNAc...) asparagine) is linked at Asn-37. Residues 84 to 104 (LGVYGALVLAVFVPLPLLLAQ) form a helical membrane-spanning segment. Topologically, residues 105-117 (CNSDEGEWRLAVG) are cytoplasmic. A helical transmembrane segment spans residues 118-138 (FLGASSVLLAGGLSLFLFLVW). Residues 139–149 (KWLRLSFLGPG) are Extracellular-facing. A helical membrane pass occupies residues 150–170 (FLSLCLAQALLIILLMAMVMF). Residues 171–184 (PPRDKKDKNHWENC) are Cytoplasmic-facing.

It localises to the membrane. The polypeptide is Transmembrane protein 140 (Tmem140) (Rattus norvegicus (Rat)).